Reading from the N-terminus, the 676-residue chain is Hemin receptor (676 aa).

Residues 1–28 (MLRSTSDRFRWSSLSLAIACTLPLATQA) form the signal peptide. Positions 44–51 (DTMVVTAT) match the TonB box motif. Positions 56–167 (SSFEAPMMVT…LGGVIAYETV (112 aa)) constitute a TBDR plug domain. The TBDR beta-barrel domain occupies 178-676 (NSGYRVYSSA…NVKFFVSYQW (499 aa)). Residues 659–676 (QGIPQDGRNVKFFVSYQW) carry the TonB C-terminal box motif.

The protein belongs to the TonB-dependent receptor family.

It is found in the cell outer membrane. Functionally, this protein is involved in the initial step of iron uptake by binding hemin, an iron chelatin siderophore that allows the bacteria to extract iron from the environment. The polypeptide is Hemin receptor (hmuR) (Yersinia pestis).